The chain runs to 1612 residues: DNA (cytosine-5)-methyltransferase PliMCI (1612 aa).

A DMAP1-binding domain is found at 7 to 101; that stretch reads CDQVIPPNVR…NGDTKEEASS (95 aa). The interval 87-338 is disordered; sequence TCSPVNGDTK…TAESKQPPLR (252 aa). The span at 94–110 shows a compositional bias: basic and acidic residues; sequence DTKEEASSNGKDDEKAE. A compositionally biased stretch (low complexity) spans 115–131; that stretch reads NGTTSNGSTTNGSSGSS. The segment covering 132–142 has biased composition (polar residues); it reads KANGHTNGGYV. Over residues 143 to 154 the composition is skewed to low complexity; it reads QSSSQEETGTSQ. 3 stretches are compositionally biased toward basic and acidic residues: residues 193-212, 222-232, and 260-289; these read VLGDDERDGVEKKEGEKKDV, EESATPDEKTL, and KKEEEKMEESSSMEVDKKEMENGDNGKKEE. Residues 626-672 form a CXXC-type zinc finger; that stretch reads ASERKKRCGVCEICQAPDCGKCTACKDMIKFGGSGKAKQACKDRRCP. Cys633, Cys636, Cys639, Cys644, Cys647, Cys650, Cys666, and Cys671 together coordinate Zn(2+). A disordered region spans residues 677-708; that stretch reads QEADENDIDEMDNSSNKENKDEKKAKKGRKLE. Acidic residues predominate over residues 678–688; that stretch reads EADENDIDEMD. Over residues 691-708 the composition is skewed to basic and acidic residues; it reads SNKENKDEKKAKKGRKLE. BAH domains are found at residues 743–871 and 967–1089; these read EKIE…EDYE and NYRK…EDPP. The disordered stretch occupies residues 1084–1121; that stretch reads CFEDPPSKSRSTRMKGKGKGKGKGKAKGKIAVEKEEEK. A compositionally biased stretch (basic residues) spans 1093–1111; sequence RSTRMKGKGKGKGKGKAKG. An SAM-dependent MTase C5-type domain is found at 1131-1590; that stretch reads LKCLDVFAGC…MEIKVCLQTK (460 aa). Residues 1142-1143, 1160-1161, 1182-1183, and Cys1183 each bind S-adenosyl-L-methionine; these read GL, EK, and DC. Residue Cys1218 is part of the active site. 2 residues coordinate S-adenosyl-L-methionine: Asn1569 and Val1571.

This sequence belongs to the class I-like SAM-binding methyltransferase superfamily. C5-methyltransferase family.

The protein localises to the nucleus. It carries out the reaction a 2'-deoxycytidine in DNA + S-adenosyl-L-methionine = a 5-methyl-2'-deoxycytidine in DNA + S-adenosyl-L-homocysteine + H(+). In terms of biological role, methylates CpG residues. This chain is DNA (cytosine-5)-methyltransferase PliMCI (DNMT), found in Paracentrotus lividus (Common sea urchin).